We begin with the raw amino-acid sequence, 242 residues long: Uridylate kinase (242 aa).

12 to 15 (KLSG) is an ATP binding site. Positions 20-25 (GEKGYG) are involved in allosteric activation by GTP. Residue glycine 55 participates in UMP binding. Residues glycine 56 and arginine 60 each coordinate ATP. UMP-binding positions include aspartate 75 and 136-143 (TGNPYFST). Positions 169 and 172 each coordinate ATP.

Belongs to the UMP kinase family. As to quaternary structure, homohexamer.

The protein resides in the cytoplasm. It carries out the reaction UMP + ATP = UDP + ADP. Its pathway is pyrimidine metabolism; CTP biosynthesis via de novo pathway; UDP from UMP (UMPK route): step 1/1. With respect to regulation, allosterically activated by GTP. Inhibited by UTP. Its function is as follows. Catalyzes the reversible phosphorylation of UMP to UDP. This chain is Uridylate kinase, found in Carboxydothermus hydrogenoformans (strain ATCC BAA-161 / DSM 6008 / Z-2901).